The primary structure comprises 61 residues: Large ribosomal subunit protein bL32 (61 aa).

Positions 1-10 are enriched in basic residues; that stretch reads MAQPKKKTSN. Residues 1–23 are disordered; it reads MAQPKKKTSNAKRDQRRATWKRK.

Belongs to the bacterial ribosomal protein bL32 family.

This is Large ribosomal subunit protein bL32 from Gloeobacter violaceus (strain ATCC 29082 / PCC 7421).